Here is a 380-residue protein sequence, read N- to C-terminus: Queuine tRNA-ribosyltransferase (380 aa).

Aspartate 96 acts as the Proton acceptor in catalysis. Substrate-binding positions include 96–100 (DSGGF), aspartate 150, glutamine 193, and glycine 220. Positions 251 to 257 (GVGAPDS) are RNA binding. Aspartate 270 (nucleophile) is an active-site residue. The segment at 275–279 (TRIAR) is RNA binding; important for wobble base 34 recognition. Residues cysteine 308, cysteine 310, cysteine 313, and histidine 339 each contribute to the Zn(2+) site.

It belongs to the queuine tRNA-ribosyltransferase family. As to quaternary structure, homodimer. Within each dimer, one monomer is responsible for RNA recognition and catalysis, while the other monomer binds to the replacement base PreQ1. The cofactor is Zn(2+).

The enzyme catalyses 7-aminomethyl-7-carbaguanine + guanosine(34) in tRNA = 7-aminomethyl-7-carbaguanosine(34) in tRNA + guanine. The protein operates within tRNA modification; tRNA-queuosine biosynthesis. In terms of biological role, catalyzes the base-exchange of a guanine (G) residue with the queuine precursor 7-aminomethyl-7-deazaguanine (PreQ1) at position 34 (anticodon wobble position) in tRNAs with GU(N) anticodons (tRNA-Asp, -Asn, -His and -Tyr). Catalysis occurs through a double-displacement mechanism. The nucleophile active site attacks the C1' of nucleotide 34 to detach the guanine base from the RNA, forming a covalent enzyme-RNA intermediate. The proton acceptor active site deprotonates the incoming PreQ1, allowing a nucleophilic attack on the C1' of the ribose to form the product. After dissociation, two additional enzymatic reactions on the tRNA convert PreQ1 to queuine (Q), resulting in the hypermodified nucleoside queuosine (7-(((4,5-cis-dihydroxy-2-cyclopenten-1-yl)amino)methyl)-7-deazaguanosine). This is Queuine tRNA-ribosyltransferase from Streptococcus pneumoniae (strain ATCC BAA-255 / R6).